A 322-amino-acid polypeptide reads, in one-letter code: GTP 3',8-cyclase (322 aa).

In terms of domain architecture, Radical SAM core spans 5-217 (SYGRVIDYLR…NIIAQKYSFK (213 aa)). Residue Arg-14 participates in GTP binding. Residues Cys-21 and Cys-25 each coordinate [4Fe-4S] cluster. Tyr-27 lines the S-adenosyl-L-methionine pocket. Position 28 (Cys-28) interacts with [4Fe-4S] cluster. GTP is bound at residue Arg-64. Gly-68 serves as a coordination point for S-adenosyl-L-methionine. Thr-95 serves as a coordination point for GTP. Ser-119 contacts S-adenosyl-L-methionine. Lys-155 contacts GTP. Position 189 (Met-189) interacts with S-adenosyl-L-methionine. Residues Cys-249 and Cys-252 each contribute to the [4Fe-4S] cluster site. 254 to 256 (RIR) contributes to the GTP binding site. Cys-266 lines the [4Fe-4S] cluster pocket.

Belongs to the radical SAM superfamily. MoaA family. As to quaternary structure, monomer and homodimer. The cofactor is [4Fe-4S] cluster.

It carries out the reaction GTP + AH2 + S-adenosyl-L-methionine = (8S)-3',8-cyclo-7,8-dihydroguanosine 5'-triphosphate + 5'-deoxyadenosine + L-methionine + A + H(+). It functions in the pathway cofactor biosynthesis; molybdopterin biosynthesis. In terms of biological role, catalyzes the cyclization of GTP to (8S)-3',8-cyclo-7,8-dihydroguanosine 5'-triphosphate. The chain is GTP 3',8-cyclase from Campylobacter lari (strain RM2100 / D67 / ATCC BAA-1060).